A 325-amino-acid polypeptide reads, in one-letter code: Tagatose 1,6-diphosphate aldolase (325 aa).

The protein belongs to the aldolase LacD family.

The catalysed reaction is D-tagatofuranose 1,6-bisphosphate = D-glyceraldehyde 3-phosphate + dihydroxyacetone phosphate. It functions in the pathway carbohydrate metabolism; D-tagatose 6-phosphate degradation; D-glyceraldehyde 3-phosphate and glycerone phosphate from D-tagatose 6-phosphate: step 2/2. The sequence is that of Tagatose 1,6-diphosphate aldolase from Staphylococcus epidermidis (strain ATCC 35984 / DSM 28319 / BCRC 17069 / CCUG 31568 / BM 3577 / RP62A).